A 108-amino-acid polypeptide reads, in one-letter code: Parvalbumin beta (108 aa).

Residue A1 is modified to N-acetylalanine. 2 EF-hand domains span residues 38–73 (KSNE…FSAG) and 77–108 (LTKT…LVKA). D51, D53, S55, F57, E59, E62, D90, D92, D94, K96, and E101 together coordinate Ca(2+).

This sequence belongs to the parvalbumin family.

In terms of biological role, in muscle, parvalbumin is thought to be involved in relaxation after contraction. It binds two calcium ions. The chain is Parvalbumin beta from Latimeria chalumnae (Coelacanth).